A 233-amino-acid chain; its full sequence is Purine nucleoside phosphorylase DeoD-type (233 aa).

Residue His4 coordinates a purine D-ribonucleoside. Phosphate-binding positions include Gly20, Arg24, Arg43, and 87-90 (RVGT). A purine D-ribonucleoside contacts are provided by residues 178–180 (EME) and 202–203 (SD). The active-site Proton donor is Asp203.

Belongs to the PNP/UDP phosphorylase family. As to quaternary structure, homohexamer; trimer of homodimers.

The catalysed reaction is a purine D-ribonucleoside + phosphate = a purine nucleobase + alpha-D-ribose 1-phosphate. It carries out the reaction a purine 2'-deoxy-D-ribonucleoside + phosphate = a purine nucleobase + 2-deoxy-alpha-D-ribose 1-phosphate. Functionally, catalyzes the reversible phosphorolytic breakdown of the N-glycosidic bond in the beta-(deoxy)ribonucleoside molecules, with the formation of the corresponding free purine bases and pentose-1-phosphate. This is Purine nucleoside phosphorylase DeoD-type from Listeria monocytogenes serotype 4b (strain CLIP80459).